The primary structure comprises 214 residues: 2-phospho-L-lactate guanylyltransferase (214 aa).

Belongs to the CofC family. As to quaternary structure, homodimer.

The enzyme catalyses (2S)-2-phospholactate + GTP + H(+) = (2S)-lactyl-2-diphospho-5'-guanosine + diphosphate. Its pathway is cofactor biosynthesis; coenzyme F420 biosynthesis. Functionally, guanylyltransferase that catalyzes the activation of (2S)-2-phospholactate (2-PL) as (2S)-lactyl-2-diphospho-5'-guanosine, via the condensation of 2-PL with GTP. It is involved in the biosynthesis of coenzyme F420, a hydride carrier cofactor. The protein is 2-phospho-L-lactate guanylyltransferase of Methanoregula boonei (strain DSM 21154 / JCM 14090 / 6A8).